We begin with the raw amino-acid sequence, 389 residues long: Succinate--CoA ligase [ADP-forming] subunit beta (389 aa).

Residues Lys-46, 53 to 55 (GRG), Glu-99, Cys-102, and Glu-107 each bind ATP. Asn-199 and Asp-213 together coordinate Mg(2+). Substrate contacts are provided by residues Asn-264 and 321 to 323 (GIV).

Belongs to the succinate/malate CoA ligase beta subunit family. Heterotetramer of two alpha and two beta subunits. Requires Mg(2+) as cofactor.

The catalysed reaction is succinate + ATP + CoA = succinyl-CoA + ADP + phosphate. The enzyme catalyses GTP + succinate + CoA = succinyl-CoA + GDP + phosphate. It functions in the pathway carbohydrate metabolism; tricarboxylic acid cycle; succinate from succinyl-CoA (ligase route): step 1/1. Functionally, succinyl-CoA synthetase functions in the citric acid cycle (TCA), coupling the hydrolysis of succinyl-CoA to the synthesis of either ATP or GTP and thus represents the only step of substrate-level phosphorylation in the TCA. The beta subunit provides nucleotide specificity of the enzyme and binds the substrate succinate, while the binding sites for coenzyme A and phosphate are found in the alpha subunit. In Haemophilus influenzae (strain 86-028NP), this protein is Succinate--CoA ligase [ADP-forming] subunit beta.